The following is a 349-amino-acid chain: tRNA pseudouridine synthase D (349 aa).

Phe27 lines the substrate pocket. The Nucleophile role is filled by Asp80. A substrate-binding site is contributed by Asn129. The TRUD domain occupies 155–303; it reads GVPNYFGPQR…VEAARRAMLL (149 aa). Phe329 is a substrate binding site.

It belongs to the pseudouridine synthase TruD family.

It carries out the reaction uridine(13) in tRNA = pseudouridine(13) in tRNA. Functionally, responsible for synthesis of pseudouridine from uracil-13 in transfer RNAs. The protein is tRNA pseudouridine synthase D of Cronobacter sakazakii (strain ATCC BAA-894) (Enterobacter sakazakii).